A 111-amino-acid polypeptide reads, in one-letter code: uncharacterized protein (111 aa).

Belongs to the asfivirus E111R family.

This is an uncharacterized protein from African swine fever virus (strain Badajoz 1971 Vero-adapted) (Ba71V).